The sequence spans 414 residues: Isocitrate dehydrogenase [NADP] cytoplasmic (414 aa).

Ser2 bears the N-acetylserine mark. The residue at position 42 (Tyr42) is a Phosphotyrosine. NADP(+) is bound at residue 75 to 77; sequence TIT. Thr77 contacts substrate. Lys81 carries the post-translational modification N6-acetyllysine. Arg82 contributes to the NADP(+) binding site. Substrate is bound by residues 94–100 and Arg109; that span reads SPNGTIR. N6-succinyllysine is present on Lys126. Substrate is bound by residues Arg132 and Lys212. An N6-acetyllysine mark is found at Lys224, Lys233, and Lys243. A Mn(2+)-binding site is contributed by Asp252. Residue Lys260 participates in NADP(+) binding. Mn(2+)-binding residues include Asp275 and Asp279. Residue 310-315 coordinates NADP(+); that stretch reads GTVTRH. Lys321 carries the N6-acetyllysine modification. Residue Asn328 participates in NADP(+) binding. A Phosphoserine modification is found at Ser389. The residue at position 400 (Lys400) is an N6-succinyllysine.

It belongs to the isocitrate and isopropylmalate dehydrogenases family. Homodimer. The cofactor is Mg(2+). Mn(2+) serves as cofactor. Post-translationally, acetylation at Lys-374 dramatically reduces catalytic activity.

Its subcellular location is the cytoplasm. The protein resides in the cytosol. It localises to the peroxisome. The catalysed reaction is D-threo-isocitrate + NADP(+) = 2-oxoglutarate + CO2 + NADPH. Its function is as follows. Catalyzes the NADP(+)-dependent oxidative decarboxylation of isocitrate (D-threo-isocitrate) to 2-ketoglutarate (2-oxoglutarate), which is required by other enzymes such as the phytanoyl-CoA dioxygenase. Plays a critical role in the generation of NADPH, an important cofactor in many biosynthesis pathways. May act as a corneal epithelial crystallin and may be involved in maintaining corneal epithelial transparency. In Homo sapiens (Human), this protein is Isocitrate dehydrogenase [NADP] cytoplasmic (IDH1).